We begin with the raw amino-acid sequence, 348 residues long: Phosphate acyltransferase (348 aa).

This sequence belongs to the PlsX family. In terms of assembly, homodimer. Probably interacts with PlsY.

Its subcellular location is the cytoplasm. The enzyme catalyses a fatty acyl-[ACP] + phosphate = an acyl phosphate + holo-[ACP]. It participates in lipid metabolism; phospholipid metabolism. Catalyzes the reversible formation of acyl-phosphate (acyl-PO(4)) from acyl-[acyl-carrier-protein] (acyl-ACP). This enzyme utilizes acyl-ACP as fatty acyl donor, but not acyl-CoA. This chain is Phosphate acyltransferase, found in Lactiplantibacillus plantarum (strain ATCC BAA-793 / NCIMB 8826 / WCFS1) (Lactobacillus plantarum).